A 298-amino-acid chain; its full sequence is Probable endonuclease 4 (298 aa).

9 residues coordinate Zn(2+): histidine 69, histidine 111, glutamate 146, aspartate 180, histidine 183, histidine 215, aspartate 228, histidine 230, and glutamate 260.

It belongs to the AP endonuclease 2 family. It depends on Zn(2+) as a cofactor.

It catalyses the reaction Endonucleolytic cleavage to 5'-phosphooligonucleotide end-products.. Endonuclease IV plays a role in DNA repair. It cleaves phosphodiester bonds at apurinic or apyrimidinic (AP) sites, generating a 3'-hydroxyl group and a 5'-terminal sugar phosphate. In Bacillus mycoides (strain KBAB4) (Bacillus weihenstephanensis), this protein is Probable endonuclease 4.